The primary structure comprises 442 residues: Prenyltransferase nscD (442 aa).

Belongs to the tryptophan dimethylallyltransferase family.

The protein operates within secondary metabolite biosynthesis. Prenyltransferase; part of the gene cluster that mediates the biosynthesis of neosartoricin B, a prenylated anthracenone that probably exhibits T-cell antiproliferative activity, suggestive of a physiological role as an immunosuppressive agent. The non-reducing polyketide synthase nscA probably synthesizes and cyclizes the decaketide backbone. The hydrolase nscB then mediates the product release through hydrolysis followed by spontaneous decarboxylation. The prenyltransferase nscD catalyzes the addition of the dimethylallyl group to the aromatic C5. The FAD-dependent monooxygenase nscC is then responsible for the stereospecific hydroxylation at C2. Neosartoricin B can be converted into two additional compounds neosartoricins C and D. Neosartoricin C is a spirocyclic compound that is cyclized through the attack of C3 hydroxyl on C14, followed by dehydration. On the other hand, neosartoricin D is a further cyclized compound in which attack of C2 on C14 in neosartoricin C results in the formation of the acetal-containing dioxabicyclo-octanone ring. Both of these compounds are novel and possibly represent related metabolites of the gene cluster. This Trichophyton verrucosum (strain HKI 0517) protein is Prenyltransferase nscD.